Here is a 505-residue protein sequence, read N- to C-terminus: Catalase (505 aa).

Active-site residues include histidine 58 and asparagine 131. Tyrosine 341 lines the heme pocket.

It belongs to the catalase family. Heme serves as cofactor.

It catalyses the reaction 2 H2O2 = O2 + 2 H2O. Functionally, decomposes hydrogen peroxide into water and oxygen; serves to protect cells from the toxic effects of hydrogen peroxide. This is Catalase (kat) from Methanosarcina barkeri (strain Fusaro / DSM 804).